A 322-amino-acid chain; its full sequence is tRNA uridine(34) hydroxylase (322 aa).

The Rhodanese domain maps to 125 to 219; it reads QDPDTIVIDA…YGKDPEVKGQ (95 aa). The Cysteine persulfide intermediate role is filled by C179.

This sequence belongs to the TrhO family.

The enzyme catalyses uridine(34) in tRNA + AH2 + O2 = 5-hydroxyuridine(34) in tRNA + A + H2O. Its function is as follows. Catalyzes oxygen-dependent 5-hydroxyuridine (ho5U) modification at position 34 in tRNAs. In Bacillus velezensis (strain DSM 23117 / BGSC 10A6 / LMG 26770 / FZB42) (Bacillus amyloliquefaciens subsp. plantarum), this protein is tRNA uridine(34) hydroxylase.